A 357-amino-acid polypeptide reads, in one-letter code: Alanine racemase (357 aa).

K33 (proton acceptor; specific for D-alanine) is an active-site residue. K33 carries the N6-(pyridoxal phosphate)lysine modification. R129 contributes to the substrate binding site. Y253 serves as the catalytic Proton acceptor; specific for L-alanine. Substrate is bound at residue M301.

The protein belongs to the alanine racemase family. Homodimer. Pyridoxal 5'-phosphate serves as cofactor.

The enzyme catalyses L-alanine = D-alanine. It functions in the pathway amino-acid biosynthesis; D-alanine biosynthesis; D-alanine from L-alanine: step 1/1. Functionally, catalyzes the interconversion of L-alanine and D-alanine. Is highly specific for alanine as substrate. May serve both anabolic and catabolic purposes. The sequence is that of Alanine racemase from Pseudomonas taetrolens.